Reading from the N-terminus, the 177-residue chain is MSEFITVARPYAKAAFDFAVEHQSVERWQDMLTFAAEVTKNEQMAELLSGALAPETLAESFIAVCGEQLDENGQNLIRVMAENGRLNALPDVLEQFIHLRAVSEATAEVDVISAAALSEQQLAKISAAMEKRLSRKVKLNCKIDKSVMAGVIIRSGDMVIDGSVRGRLERLADVLQS.

The protein belongs to the ATPase delta chain family. F-type ATPases have 2 components, F(1) - the catalytic core - and F(0) - the membrane proton channel. F(1) has five subunits: alpha(3), beta(3), gamma(1), delta(1), epsilon(1). F(0) has three main subunits: a(1), b(2) and c(10-14). The alpha and beta chains form an alternating ring which encloses part of the gamma chain. F(1) is attached to F(0) by a central stalk formed by the gamma and epsilon chains, while a peripheral stalk is formed by the delta and b chains.

It localises to the cell inner membrane. Functionally, f(1)F(0) ATP synthase produces ATP from ADP in the presence of a proton or sodium gradient. F-type ATPases consist of two structural domains, F(1) containing the extramembraneous catalytic core and F(0) containing the membrane proton channel, linked together by a central stalk and a peripheral stalk. During catalysis, ATP synthesis in the catalytic domain of F(1) is coupled via a rotary mechanism of the central stalk subunits to proton translocation. This protein is part of the stalk that links CF(0) to CF(1). It either transmits conformational changes from CF(0) to CF(1) or is implicated in proton conduction. This Shigella flexneri protein is ATP synthase subunit delta.